The primary structure comprises 214 residues: Large ribosomal subunit protein uL3 (214 aa).

The span at phenylalanine 130 to glutamine 151 shows a compositional bias: polar residues. The segment at phenylalanine 130–arginine 163 is disordered. Position 153 is an N5-methylglutamine (glutamine 153).

Belongs to the universal ribosomal protein uL3 family. As to quaternary structure, part of the 50S ribosomal subunit. Forms a cluster with proteins L14 and L19. Methylated by PrmB.

Functionally, one of the primary rRNA binding proteins, it binds directly near the 3'-end of the 23S rRNA, where it nucleates assembly of the 50S subunit. The chain is Large ribosomal subunit protein uL3 from Chromobacterium violaceum (strain ATCC 12472 / DSM 30191 / JCM 1249 / CCUG 213 / NBRC 12614 / NCIMB 9131 / NCTC 9757 / MK).